Here is a 107-residue protein sequence, read N- to C-terminus: EPIDERMAL PATTERNING FACTOR-like protein 3 (107 aa).

A signal peptide spans 1-24; it reads MEYMFLLMSKFFFVFPIIIYIGPA. 3 cysteine pairs are disulfide-bonded: Cys-64-Cys-102, Cys-68-Cys-74, and Cys-71-Cys-104.

It belongs to the plant cysteine rich small secretory peptide family. Epidermal patterning factor subfamily.

It localises to the secreted. Functionally, controls stomatal patterning. The protein is EPIDERMAL PATTERNING FACTOR-like protein 3 of Arabidopsis thaliana (Mouse-ear cress).